Consider the following 601-residue polypeptide: Elongation factor 4 (601 aa).

Residues 6-188 (QFIRNFSIIA…AITKEIPAPK (183 aa)) form the tr-type G domain. Residues 18-23 (DHGKST) and 135-138 (NKID) contribute to the GTP site.

It belongs to the TRAFAC class translation factor GTPase superfamily. Classic translation factor GTPase family. LepA subfamily.

The protein localises to the cell inner membrane. It carries out the reaction GTP + H2O = GDP + phosphate + H(+). Its function is as follows. Required for accurate and efficient protein synthesis under certain stress conditions. May act as a fidelity factor of the translation reaction, by catalyzing a one-codon backward translocation of tRNAs on improperly translocated ribosomes. Back-translocation proceeds from a post-translocation (POST) complex to a pre-translocation (PRE) complex, thus giving elongation factor G a second chance to translocate the tRNAs correctly. Binds to ribosomes in a GTP-dependent manner. The polypeptide is Elongation factor 4 (Leptospira borgpetersenii serovar Hardjo-bovis (strain JB197)).